The chain runs to 301 residues: Lipoyl synthase (301 aa).

Residues cysteine 50, cysteine 55, cysteine 61, cysteine 76, cysteine 80, cysteine 83, and serine 289 each coordinate [4Fe-4S] cluster. One can recognise a Radical SAM core domain in the interval 62–278 (WNHRTATFLL…RRYALERGFR (217 aa)).

The protein belongs to the radical SAM superfamily. Lipoyl synthase family. [4Fe-4S] cluster is required as a cofactor.

The protein resides in the cytoplasm. It carries out the reaction [[Fe-S] cluster scaffold protein carrying a second [4Fe-4S](2+) cluster] + N(6)-octanoyl-L-lysyl-[protein] + 2 oxidized [2Fe-2S]-[ferredoxin] + 2 S-adenosyl-L-methionine + 4 H(+) = [[Fe-S] cluster scaffold protein] + N(6)-[(R)-dihydrolipoyl]-L-lysyl-[protein] + 4 Fe(3+) + 2 hydrogen sulfide + 2 5'-deoxyadenosine + 2 L-methionine + 2 reduced [2Fe-2S]-[ferredoxin]. It functions in the pathway protein modification; protein lipoylation via endogenous pathway; protein N(6)-(lipoyl)lysine from octanoyl-[acyl-carrier-protein]: step 2/2. In terms of biological role, catalyzes the radical-mediated insertion of two sulfur atoms into the C-6 and C-8 positions of the octanoyl moiety bound to the lipoyl domains of lipoate-dependent enzymes, thereby converting the octanoylated domains into lipoylated derivatives. The sequence is that of Lipoyl synthase from Roseiflexus sp. (strain RS-1).